The sequence spans 408 residues: Putative FBD-associated F-box protein At5g50270 (408 aa).

The 54-residue stretch at 1–54 (MDRISGLPDELLLRVLSLLPNVKDVVVTMVLSKRWQFLWMMVPKLVYDDSYQNL) folds into the F-box domain. Residues 345–408 (PLRDDLSSVP…VNPDKKYEMI (64 aa)) form the FBD domain.

The polypeptide is Putative FBD-associated F-box protein At5g50270 (Arabidopsis thaliana (Mouse-ear cress)).